A 118-amino-acid chain; its full sequence is Large ribosomal subunit protein bL20 (118 aa).

It belongs to the bacterial ribosomal protein bL20 family.

Its function is as follows. Binds directly to 23S ribosomal RNA and is necessary for the in vitro assembly process of the 50S ribosomal subunit. It is not involved in the protein synthesizing functions of that subunit. The protein is Large ribosomal subunit protein bL20 of Agathobacter rectalis (strain ATCC 33656 / DSM 3377 / JCM 17463 / KCTC 5835 / VPI 0990) (Eubacterium rectale).